The primary structure comprises 440 residues: Elongation factor 1-alpha (440 aa).

One can recognise a tr-type G domain in the interval 5 to 228; it reads KPHINLVVIG…ALDTYIQPPK (224 aa). The segment at 14 to 21 is G1; that stretch reads GHVDHGKS. 14 to 21 is a GTP binding site; it reads GHVDHGKS. Residue Ser21 coordinates Mg(2+). Positions 70-74 are G2; the sequence is GVTID. Residues 91-94 form a G3 region; it reads DAPG. GTP contacts are provided by residues 91 to 95 and 153 to 156; these read DAPGH and NKMD. A G4 region spans residues 153-156; the sequence is NKMD. Residues 194–196 form a G5 region; that stretch reads SAW.

It belongs to the TRAFAC class translation factor GTPase superfamily. Classic translation factor GTPase family. EF-Tu/EF-1A subfamily.

Its subcellular location is the cytoplasm. It carries out the reaction GTP + H2O = GDP + phosphate + H(+). In terms of biological role, GTP hydrolase that promotes the GTP-dependent binding of aminoacyl-tRNA to the A-site of ribosomes during protein biosynthesis. This is Elongation factor 1-alpha from Hyperthermus butylicus (strain DSM 5456 / JCM 9403 / PLM1-5).